The sequence spans 61 residues: uncharacterized protein (61 aa).

This is an uncharacterized protein from Homo sapiens (Human).